A 370-amino-acid chain; its full sequence is Coproporphyrin III ferrochelatase (370 aa).

The Fe-coproporphyrin III site is built by Ser58 and Tyr127. His189 and Glu276 together coordinate Fe(2+).

This sequence belongs to the ferrochelatase family.

The protein resides in the cytoplasm. It catalyses the reaction Fe-coproporphyrin III + 2 H(+) = coproporphyrin III + Fe(2+). Its pathway is porphyrin-containing compound metabolism; protoheme biosynthesis. Involved in coproporphyrin-dependent heme b biosynthesis. Catalyzes the insertion of ferrous iron into coproporphyrin III to form Fe-coproporphyrin III. The chain is Coproporphyrin III ferrochelatase from Corynebacterium glutamicum (strain R).